A 325-amino-acid polypeptide reads, in one-letter code: Serpentine receptor class gamma-16 (325 aa).

7 consecutive transmembrane segments (helical) span residues Phe-25 to Ile-45, Val-65 to Pro-85, Leu-87 to Trp-107, Leu-144 to Leu-164, Trp-187 to Ile-207, Phe-232 to Val-252, and Leu-264 to Leu-284.

Belongs to the nematode receptor-like protein srg family.

Its subcellular location is the membrane. The chain is Serpentine receptor class gamma-16 (srg-16) from Caenorhabditis elegans.